The primary structure comprises 459 residues: uncharacterized protein (459 aa).

The TRAM domain maps to 6 to 64; it reads KNKQEKNIIITIKRLGINGEGIGYYKKKIIFIPGALPNEVVVAKIVDRHPHYLEGELVR. S-adenosyl-L-methionine contacts are provided by glutamine 289, tyrosine 318, glutamate 339, and aspartate 387. Cysteine 414 (nucleophile) is an active-site residue.

This sequence belongs to the class I-like SAM-binding methyltransferase superfamily. RNA M5U methyltransferase family.

This is an uncharacterized protein from Lactobacillus johnsonii (strain CNCM I-12250 / La1 / NCC 533).